We begin with the raw amino-acid sequence, 358 residues long: MATDDASFPWDQDSILSRDLLSALSSQLCYENLNRSCIRSPYSPGPRLILHAVFGFSAVLAVCGNLLVMTSILHFRQLHSPANFLVASLACADLLVGLTVMPFSMVRSVEGCWYFGDIYCKFHSSFDVSFCYSSIFHLCFISVDRYIAVSDPLIYLTRFTASVSGKCITFSWFLSIIYSFSLLYTGASEAGLEDLVSALTCVGGCQLAVNQSWVFINFLLFLVPTLVMMTVYSKVFLIAKQQAQNIEKIGKQTARASESYKDRVAKRERKAAKTLGITVAAFLLSWLPYFIDSIIDAFLGFITPTYVYEILVWIAYYNSAMNPLIYAFFYPWFRKAIKLIVTGKILRENSSATNLFPE.

The Extracellular segment spans residues 1–47 (MATDDASFPWDQDSILSRDLLSALSSQLCYENLNRSCIRSPYSPGPR). A glycan (N-linked (GlcNAc...) asparagine) is linked at Asn34. Cystine bridges form between Cys37-Cys201 and Cys120-Cys205. Residues 48–68 (LILHAVFGFSAVLAVCGNLLV) traverse the membrane as a helical segment. The Cytoplasmic portion of the chain corresponds to 69–83 (MTSILHFRQLHSPAN). Residues 84-104 (FLVASLACADLLVGLTVMPFS) form a helical membrane-spanning segment. Residues 105–121 (MVRSVEGCWYFGDIYCK) lie on the Extracellular side of the membrane. A helical transmembrane segment spans residues 122-143 (FHSSFDVSFCYSSIFHLCFISV). The Cytoplasmic portion of the chain corresponds to 144–166 (DRYIAVSDPLIYLTRFTASVSGK). Residues 167 to 187 (CITFSWFLSIIYSFSLLYTGA) form a helical membrane-spanning segment. Over 188–212 (SEAGLEDLVSALTCVGGCQLAVNQS) the chain is Extracellular. A glycan (N-linked (GlcNAc...) asparagine) is linked at Asn210. Residues 213-233 (WVFINFLLFLVPTLVMMTVYS) form a helical membrane-spanning segment. Residues 234-274 (KVFLIAKQQAQNIEKIGKQTARASESYKDRVAKRERKAAKT) are Cytoplasmic-facing. A helical transmembrane segment spans residues 275 to 295 (LGITVAAFLLSWLPYFIDSII). The Extracellular segment spans residues 296-309 (DAFLGFITPTYVYE). Residues 310–333 (ILVWIAYYNSAMNPLIYAFFYPWF) form a helical membrane-spanning segment. The Cytoplasmic segment spans residues 334 to 358 (RKAIKLIVTGKILRENSSATNLFPE).

This sequence belongs to the G-protein coupled receptor 1 family.

It localises to the cell membrane. Olfactory receptor specific for N,N-dimethylalkylamines trace amines. Trace amine compounds are enriched in animal body fluids and act on trace amine-associated receptors (TAARs) to elicit both intraspecific and interspecific innate behaviors. Ligand-binding causes a conformation change that triggers signaling via G(s)-class of G alpha proteins (GNAL or GNAS). The protein is Trace amine-associated receptor 7e of Rattus norvegicus (Rat).